Here is a 316-residue protein sequence, read N- to C-terminus: Protein C4 (316 aa).

The protein belongs to the poxviridae OPG031 protein family.

The protein resides in the host cytoplasm. It is found in the host nucleus. In terms of biological role, plays a role in the inhibition of host NF-kappa-B activation. Mechanistically, blocks the subunit p65/RELA translocation into the host nucleus. This chain is Protein C4 (OPG031), found in Homo sapiens (Human).